Consider the following 228-residue polypeptide: PKHD-type hydroxylase XCV3086 (228 aa).

The Fe2OG dioxygenase domain occupies 78–180 (RIYPPLFNRY…RVACFFWTQS (103 aa)). Residues histidine 96, aspartate 98, and histidine 161 each contribute to the Fe cation site. Arginine 171 contributes to the 2-oxoglutarate binding site.

Fe(2+) is required as a cofactor. It depends on L-ascorbate as a cofactor.

The protein is PKHD-type hydroxylase XCV3086 of Xanthomonas euvesicatoria pv. vesicatoria (strain 85-10) (Xanthomonas campestris pv. vesicatoria).